The following is a 676-amino-acid chain: Ribonuclease R (676 aa).

The region spanning 207-527 is the RNB domain; it reads RKDLRDLLCF…LIVHRLLFNP (321 aa). The region spanning 566–651 is the S1 motif domain; it reads NKFLQEQPKT…LTQKIVWSIA (86 aa). Residues 656 to 676 form a disordered region; sequence DKPKKIKKTPSKKKGTKKRAS. Residues 659–676 are compositionally biased toward basic residues; sequence KKIKKTPSKKKGTKKRAS.

This sequence belongs to the RNR ribonuclease family. RNase R subfamily.

The protein localises to the cytoplasm. The enzyme catalyses Exonucleolytic cleavage in the 3'- to 5'-direction to yield nucleoside 5'-phosphates.. In terms of biological role, 3'-5' exoribonuclease that releases 5'-nucleoside monophosphates and is involved in maturation of structured RNAs. The sequence is that of Ribonuclease R from Chlamydia pneumoniae (Chlamydophila pneumoniae).